Here is a 172-residue protein sequence, read N- to C-terminus: Water stress-inducible protein Rab21 (172 aa).

A disordered region spans residues 1–172 (MEHQGQHGHV…KIKEKLPGQH (172 aa)). The Type A repeat unit spans residues 3–28 (HQGQHGHVTSRVDEYGNPVGTGAGHG). The segment covering 21 to 65 (VGTGAGHGQMGTAGMGTHGTTGGMGTHGTTGGMGTHGTTGTGGGQ) has biased composition (gly residues). The Type B repeat unit spans residues 98–115 (RRKKGIKEKIKEKLPGGN). Residues 124-139 (GGTGGAYGQQGHGTGM) show a composition bias toward gly residues. Residues 125–149 (GTGGAYGQQGHGTGMTTGTTGAHGT) form a Type A repeat. Low complexity predominate over residues 140 to 153 (TTGTTGAHGTTTTD). The span at 154-172 (TGEKKGIMDKIKEKLPGQH) shows a compositional bias: basic and acidic residues. Residues 156 to 172 (EKKGIMDKIKEKLPGQH) form a Type B repeat.

Belongs to the plant dehydrin family.

Its subcellular location is the cytoplasm. The chain is Water stress-inducible protein Rab21 (RAB21) from Oryza sativa subsp. indica (Rice).